A 357-amino-acid chain; its full sequence is DNA replication and repair protein RecF (357 aa).

30 to 37 (GANGSGKT) contributes to the ATP binding site.

This sequence belongs to the RecF family.

Its subcellular location is the cytoplasm. Its function is as follows. The RecF protein is involved in DNA metabolism; it is required for DNA replication and normal SOS inducibility. RecF binds preferentially to single-stranded, linear DNA. It also seems to bind ATP. This is DNA replication and repair protein RecF from Shigella dysenteriae serotype 1 (strain Sd197).